Consider the following 209-residue polypeptide: ATP-dependent Clp protease proteolytic subunit (209 aa).

S103 (nucleophile) is an active-site residue. Residue H128 is part of the active site.

It belongs to the peptidase S14 family. As to quaternary structure, fourteen ClpP subunits assemble into 2 heptameric rings which stack back to back to give a disk-like structure with a central cavity, resembling the structure of eukaryotic proteasomes.

The protein resides in the cytoplasm. The catalysed reaction is Hydrolysis of proteins to small peptides in the presence of ATP and magnesium. alpha-casein is the usual test substrate. In the absence of ATP, only oligopeptides shorter than five residues are hydrolyzed (such as succinyl-Leu-Tyr-|-NHMec, and Leu-Tyr-Leu-|-Tyr-Trp, in which cleavage of the -Tyr-|-Leu- and -Tyr-|-Trp bonds also occurs).. In terms of biological role, cleaves peptides in various proteins in a process that requires ATP hydrolysis. Has a chymotrypsin-like activity. Plays a major role in the degradation of misfolded proteins. This Lawsonia intracellularis (strain PHE/MN1-00) protein is ATP-dependent Clp protease proteolytic subunit.